A 448-amino-acid polypeptide reads, in one-letter code: Solute carrier family 52, riboflavin transporter, member 2 (448 aa).

Helical transmembrane passes span 14–34, 47–67, 79–99, 105–125, and 147–167; these read LLVA…WVEL, LPSY…VVTL, VPIQ…APLW, VAGQ…ALAC, and FFLG…VQGV. Residue asparagine 178 is glycosylated (N-linked (GlcNAc...) asparagine). The chain crosses the membrane as a helical span at residues 198 to 218; the sequence is WALTALLVTSAAAFQGLLLLL. Positions 228 to 267 are disordered; it reads GAGPELPLGSPGAEEEEKEEEEALPLQEPPSQAAGTIPGP. The span at 240–250 shows a compositional bias: acidic residues; it reads AEEEEKEEEEA. Transmembrane regions (helical) follow at residues 280 to 300, 315 to 335, 342 to 362, 369 to 389, and 407 to 427; these read AFLL…LPAV, LAVV…MGVL, LVGL…LAIL, VGTT…LCVF, and ALLA…GTMF.

This sequence belongs to the riboflavin transporter family.

Its subcellular location is the cell membrane. It catalyses the reaction riboflavin(in) = riboflavin(out). Its activity is regulated as follows. Riboflavin transport is Na(+)-independent but moderately pH-sensitive. Activity is strongly inhibited by riboflavin analogs, such as lumiflavin. Weakly inhibited by flavin adenine dinucleotide (FAD) and flavin mononucleotide (FMN). In terms of biological role, plasma membrane transporter mediating the uptake by cells of the water soluble vitamin B2/riboflavin that plays a key role in biochemical oxidation-reduction reactions of the carbohydrate, lipid, and amino acid metabolism. May also act as a receptor for 4-hydroxybutyrate. Its function is as follows. (Microbial infection) In case of infection by retroviruses, acts as a cell receptor to retroviral envelopes similar to the porcine endogenous retrovirus (PERV-A). The chain is Solute carrier family 52, riboflavin transporter, member 2 (SLC52A2) from Papio hamadryas (Hamadryas baboon).